A 260-amino-acid chain; its full sequence is Trans-aconitate 2-methyltransferase (260 aa).

It belongs to the methyltransferase superfamily. Tam family.

The protein resides in the cytoplasm. The enzyme catalyses trans-aconitate + S-adenosyl-L-methionine = (E)-3-(methoxycarbonyl)pent-2-enedioate + S-adenosyl-L-homocysteine. Catalyzes the S-adenosylmethionine monomethyl esterification of trans-aconitate. This is Trans-aconitate 2-methyltransferase from Paracidovorax citrulli (strain AAC00-1) (Acidovorax citrulli).